The primary structure comprises 476 residues: FAD-dependent monooxygenase prhF (476 aa).

Positions 41, 55, and 114 each coordinate FAD. The active site involves tyrosine 222. Positions 314 and 327 each coordinate FAD. N-linked (GlcNAc...) asparagine glycosylation occurs at asparagine 343. Residues 447 to 467 form a helical membrane-spanning segment; that stretch reads LGSTPIQMLTLLLPCLFYFMY. Asparagine 471 carries N-linked (GlcNAc...) asparagine glycosylation.

Belongs to the paxM FAD-dependent monooxygenase family. Requires FAD as cofactor.

Its subcellular location is the membrane. It participates in secondary metabolite biosynthesis; terpenoid biosynthesis. FAD-dependent monooxygenase; part of the gene cluster that mediates the biosynthesis of paraherquonin, a meroterpenoid with a unique, highly congested hexacyclic molecular architecture. The first step of the pathway is the synthesis of 3,5-dimethylorsellinic acid (DMOA) by the polyketide synthase prhL. Synthesis of DMOA is followed by farnesylation by the prenyltransferase prhE, methylesterification by the methyl-transferase prhM, epoxidation of the prenyl chain by the flavin-dependent monooxygenase prhF, and cyclization of the farnesyl moiety by the terpene cyclase prhH, to yield the tetracyclic intermediate, protoaustinoid A. The short chain dehydrogenase prhI then oxidizes the C-3 alcohol group of the terpene cyclase product to transform protoaustinoid A into protoaustinoid B. The FAD-binding monooxygenase prhJ catalyzes the oxidation of protoaustinoid B into preaustinoid A which is further oxidized into preaustinoid A1 by FAD-binding monooxygenase phrK. Finally, prhA leads to berkeleydione via the berkeleyone B intermediate. PrhA is a multifunctional dioxygenase that first desaturates at C5-C6 to form berkeleyone B, followed by rearrangement of the A/B-ring to form the cycloheptadiene moiety in berkeleydione. Berkeleydione serves as the key intermediate for the biosynthesis of paraherquonin as well as many other meroterpenoids. The cytochrome P450 monooxygenases prhB, prhD, and prhN, as well as the isomerase prhC, are probably involved in the late stage of paraherquonin biosynthesis, after the production of berkeleydione. Especially prhC might be a multifunctional enzyme that catalyzes the D-ring expansion via intramolecular methoxy rearrangement, as well as the hydrolysis of the expanded D-ring. The protein is FAD-dependent monooxygenase prhF of Penicillium brasilianum.